The following is a 349-amino-acid chain: GDP-mannose:glycolipid 4-beta-D-mannosyltransferase (349 aa).

Residues 1 to 14 form the signal peptide; that stretch reads MSASASLPVTRAAA.

Belongs to the glycosyltransferase 94 family.

The protein resides in the cell inner membrane. The catalysed reaction is beta-D-GlcA-(1-&gt;2)-alpha-D-Man-(1-&gt;3)-beta-D-Glc-(1-&gt;4)-alpha-D-Glc-di-trans,octa-cis-undecaprenyl diphosphate + GDP-alpha-D-mannose = beta-D-Man-(1-&gt;4)-beta-D-GlcA-(1-&gt;2)-alpha-D-Man-(1-&gt;3)-beta-D-Glc-(1-&gt;4)-alpha-D-Glc-di-trans,octa-cis-undecaprenyl diphosphate + GDP + H(+). The protein operates within glycan biosynthesis; xanthan biosynthesis. Nonprocessive beta-mannosyltransferase that catalyzes the transfer of a mannose residue from GDP-mannose to glucuronic acid-beta-1,2-mannose-alpha-1,3-glucose-beta-1,4-glucose-PP-polyisoprenyl to form the lipid-linked pentasaccharide repeating unit of xanthan, Man-GlcA-Man-Glc(2)-PP-Pol. Is involved in the biosynthesis of the exopolysaccharide xanthan. To a lesser extent, can also use ADP-Man and even GDP-Glc as sugar donor substrates in vitro. Is unable to transfer a Man residue to the free-tetrasaccharide GlcA-Man-Glc(2) used as an acceptor, which indicates that the diphosphate group and the lipid moiety in the acceptor substrate are of major importance for acceptor binding and catalysis. The polypeptide is GDP-mannose:glycolipid 4-beta-D-mannosyltransferase (gumI) (Xanthomonas campestris pv. campestris).